The primary structure comprises 124 residues: Small ribosomal subunit protein uS13 (124 aa).

The interval 99–124 (RGQRTRTNARTRKGPRKTVGVMRKKS) is disordered. Residues 101-124 (QRTRTNARTRKGPRKTVGVMRKKS) are compositionally biased toward basic residues.

It belongs to the universal ribosomal protein uS13 family. As to quaternary structure, part of the 30S ribosomal subunit. Forms a loose heterodimer with protein S19. Forms two bridges to the 50S subunit in the 70S ribosome.

In terms of biological role, located at the top of the head of the 30S subunit, it contacts several helices of the 16S rRNA. In the 70S ribosome it contacts the 23S rRNA (bridge B1a) and protein L5 of the 50S subunit (bridge B1b), connecting the 2 subunits; these bridges are implicated in subunit movement. Contacts the tRNAs in the A and P-sites. The sequence is that of Small ribosomal subunit protein uS13 from Caldicellulosiruptor bescii (strain ATCC BAA-1888 / DSM 6725 / KCTC 15123 / Z-1320) (Anaerocellum thermophilum).